The chain runs to 428 residues: 4-hydroxy-3-methylbut-2-en-1-yl diphosphate synthase (flavodoxin) (428 aa).

Cys-315, Cys-318, Cys-361, and Glu-368 together coordinate [4Fe-4S] cluster.

This sequence belongs to the IspG family. It depends on [4Fe-4S] cluster as a cofactor.

It catalyses the reaction (2E)-4-hydroxy-3-methylbut-2-enyl diphosphate + oxidized [flavodoxin] + H2O + 2 H(+) = 2-C-methyl-D-erythritol 2,4-cyclic diphosphate + reduced [flavodoxin]. It participates in isoprenoid biosynthesis; isopentenyl diphosphate biosynthesis via DXP pathway; isopentenyl diphosphate from 1-deoxy-D-xylulose 5-phosphate: step 5/6. Functionally, converts 2C-methyl-D-erythritol 2,4-cyclodiphosphate (ME-2,4cPP) into 1-hydroxy-2-methyl-2-(E)-butenyl 4-diphosphate. This chain is 4-hydroxy-3-methylbut-2-en-1-yl diphosphate synthase (flavodoxin), found in Ralstonia pickettii (strain 12J).